A 141-amino-acid polypeptide reads, in one-letter code: Acetyltransferase YpeA (141 aa).

One can recognise an N-acetyltransferase domain in the interval Met-1–Tyr-141.

The protein belongs to the acetyltransferase family. YpeA subfamily.

The polypeptide is Acetyltransferase YpeA (Salmonella choleraesuis (strain SC-B67)).